We begin with the raw amino-acid sequence, 137 residues long: Large ribosomal subunit protein uL16 (137 aa).

It belongs to the universal ribosomal protein uL16 family. In terms of assembly, part of the 50S ribosomal subunit.

Binds 23S rRNA and is also seen to make contacts with the A and possibly P site tRNAs. This is Large ribosomal subunit protein uL16 from Streptococcus pyogenes serotype M1.